Reading from the N-terminus, the 223-residue chain is Putative germin-like protein subfamily 1 member 12 (223 aa).

An N-terminal signal peptide occupies residues 1–24 (MNMKNLYLAILYLLAASTLPFAIA). A disulfide bridge connects residues cysteine 34 and cysteine 51. The 152-residue stretch at 65–216 (SGLDKARTTE…AFQLDPKVII (152 aa)) folds into the Cupin type-1 domain. Asparagine 81 is a glycosylation site (N-linked (GlcNAc...) asparagine). Mn(2+) is bound by residues histidine 114, histidine 116, and glutamate 121. Residue asparagine 145 is glycosylated (N-linked (GlcNAc...) asparagine). Residue histidine 162 coordinates Mn(2+).

It belongs to the germin family. As to quaternary structure, oligomer (believed to be a pentamer but probably hexamer).

Its subcellular location is the secreted. It localises to the extracellular space. The protein localises to the apoplast. In terms of biological role, may play a role in plant defense. Probably has no oxalate oxidase activity even if the active site is conserved. This is Putative germin-like protein subfamily 1 member 12 from Arabidopsis thaliana (Mouse-ear cress).